A 98-amino-acid polypeptide reads, in one-letter code: Large ribosomal subunit protein bL27 (98 aa).

Residues 1–10 constitute a propeptide that is removed on maturation; it reads MELKMNLQLF. The disordered stretch occupies residues 11–30; it reads AQKKGTGSSKNGRDSISKRL.

It belongs to the bacterial ribosomal protein bL27 family. Post-translationally, the N-terminus is cleaved by ribosomal processing cysteine protease Prp.

The chain is Large ribosomal subunit protein bL27 from Natranaerobius thermophilus (strain ATCC BAA-1301 / DSM 18059 / JW/NM-WN-LF).